The sequence spans 643 residues: 1-deoxy-D-xylulose-5-phosphate synthase (643 aa).

Residues histidine 78 and 119–121 each bind thiamine diphosphate; that span reads AHS. Aspartate 150 is a Mg(2+) binding site. Thiamine diphosphate is bound by residues 151-152, asparagine 179, tyrosine 288, and glutamate 370; that span reads GS. Residue asparagine 179 coordinates Mg(2+).

The protein belongs to the transketolase family. DXPS subfamily. In terms of assembly, homodimer. It depends on Mg(2+) as a cofactor. Requires thiamine diphosphate as cofactor.

It carries out the reaction D-glyceraldehyde 3-phosphate + pyruvate + H(+) = 1-deoxy-D-xylulose 5-phosphate + CO2. Its pathway is metabolic intermediate biosynthesis; 1-deoxy-D-xylulose 5-phosphate biosynthesis; 1-deoxy-D-xylulose 5-phosphate from D-glyceraldehyde 3-phosphate and pyruvate: step 1/1. In terms of biological role, catalyzes the acyloin condensation reaction between C atoms 2 and 3 of pyruvate and glyceraldehyde 3-phosphate to yield 1-deoxy-D-xylulose-5-phosphate (DXP). This is 1-deoxy-D-xylulose-5-phosphate synthase from Brucella canis (strain ATCC 23365 / NCTC 10854 / RM-666).